The chain runs to 794 residues: DNA ligase (794 aa).

NAD(+) is bound by residues 35–39, 84–85, and Glu-126; these read DAEYD and SL. Catalysis depends on Lys-128, which acts as the N6-AMP-lysine intermediate. Residues Arg-149, Glu-186, Lys-302, and Lys-326 each coordinate NAD(+). 4 residues coordinate Zn(2+): Cys-420, Cys-423, Cys-450, and Cys-456. One can recognise a BRCT domain in the interval 711-794; the sequence is VEGLPLAGQT…KLFDEHGVAR (84 aa).

It belongs to the NAD-dependent DNA ligase family. LigA subfamily. Requires Mg(2+) as cofactor. Mn(2+) is required as a cofactor.

It catalyses the reaction NAD(+) + (deoxyribonucleotide)n-3'-hydroxyl + 5'-phospho-(deoxyribonucleotide)m = (deoxyribonucleotide)n+m + AMP + beta-nicotinamide D-nucleotide.. In terms of biological role, DNA ligase that catalyzes the formation of phosphodiester linkages between 5'-phosphoryl and 3'-hydroxyl groups in double-stranded DNA using NAD as a coenzyme and as the energy source for the reaction. It is essential for DNA replication and repair of damaged DNA. This is DNA ligase from Pseudomonas aeruginosa (strain UCBPP-PA14).